The following is an 85-amino-acid chain: Protein Vpu (85 aa).

The Extracellular segment spans residues 1-7 (MHHRDLL). A helical membrane pass occupies residues 8–28 (AIIIISALLFINVILWGFILR). Topologically, residues 29–85 (KYLEQKEQDRKEREILERLRRIREIRDDSDYESNGEEEQEVMDLVLSHGFDNPMFEP) are cytoplasmic.

This sequence belongs to the HIV-1 VPU protein family. In terms of assembly, homopentamer. Interacts with host CD4 and BRTC; these interactions induce proteasomal degradation of CD4. Interacts with host BST2; this interaction leads to the degradation of host BST2. Interacts with host FBXW11. Interacts with host AP1M1; this interaction plays a role in the mistrafficking and subsequent degradation of host BST2. Interacts with host RANBP2; this interaction allows Vpu to down-regulate host BLM sumoylation. Post-translationally, phosphorylated by host CK2. This phosphorylation is necessary for interaction with human BTRC and degradation of CD4.

It localises to the host membrane. With respect to regulation, ion channel activity is inhibited by hexamethylene amiloride in vitro. Functionally, enhances virion budding by targeting host CD4 and Tetherin/BST2 to proteasome degradation. Degradation of CD4 prevents any unwanted premature interactions between viral Env and its host receptor CD4 in the endoplasmic reticulum. Degradation of antiretroviral protein Tetherin/BST2 is important for virion budding, as BST2 tethers new viral particles to the host cell membrane. Mechanistically, Vpu bridges either CD4 or BST2 to BTRC, a substrate recognition subunit of the Skp1/Cullin/F-box protein E3 ubiquitin ligase, induces their ubiquitination and subsequent proteasomal degradation. The alteration of the E3 ligase specificity by Vpu seems to promote the degradation of host IKBKB, leading to NF-kappa-B down-regulation and subsequent apoptosis. Acts as a viroporin that forms an oligomeric ion channel in membranes. Modulates the host DNA repair mechanisms to promote degradation of nuclear viral cDNA in cells that are already productively infected in order to suppress immune sensing and proviral hyper-integration (superinfection). Manipulates PML-NBs and modulates SUMOylation of host BLM protein thereby enhancing its DNA-end processing activity toward viral unintegrated linear DNA. Also inhibits RAD52-mediated homologous repair of viral cDNA, preventing the generation of dead-end circular forms of single copies of the long terminal repeat and permitting sustained nucleolytic attack. The protein is Protein Vpu of Human immunodeficiency virus type 1 group O (isolate ANT70) (HIV-1).